Reading from the N-terminus, the 374-residue chain is Pectate lyase 1 (374 aa).

The N-terminal stretch at 1–21 (MDSPCLVALLVFSFVIGSCFS) is a signal peptide. 2 disulfides stabilise this stretch: Cys-28–Cys-45 and Cys-128–Cys-147. N-linked (GlcNAc...) asparagine glycosylation occurs at Asn-158. A Ca(2+)-binding site is contributed by Asp-170. A glycan (N-linked (GlcNAc...) (complex) asparagine) is linked at Asn-191. Residues Asp-194 and Asp-198 each contribute to the Ca(2+) site. Residue Arg-250 is part of the active site. An N-linked (GlcNAc...) asparagine glycan is attached at Asn-293. Cys-306 and Cys-312 are disulfide-bonded. A glycan (N-linked (GlcNAc...) (complex) asparagine) is linked at Asn-354.

It belongs to the polysaccharide lyase 1 family. Amb a subfamily. Ca(2+) is required as a cofactor. N-glycosylated; contains fucose and xylose.

The catalysed reaction is Eliminative cleavage of (1-&gt;4)-alpha-D-galacturonan to give oligosaccharides with 4-deoxy-alpha-D-galact-4-enuronosyl groups at their non-reducing ends.. The protein operates within glycan metabolism; pectin degradation; 2-dehydro-3-deoxy-D-gluconate from pectin: step 2/5. Functionally, has pectate lyase activity. The sequence is that of Pectate lyase 1 from Cryptomeria japonica (Japanese cedar).